Reading from the N-terminus, the 593-residue chain is Solute carrier family 13 member 2 (593 aa).

The next 4 membrane-spanning stretches (helical) occupy residues 11-31 (YRMYLLVFLLPISLLPLPILV), 53-73 (ALPLAVTALLPLCLFPMMGIM), 86-106 (TNVLFIGGLLLAIAVEHWNLH), and 121-141 (PALLILGFMVVTAFLSMWISN). Polar residues predominate over residues 164–184 (SNVEEGSDNPTFELQEPSPQK). Residues 164 to 204 (SNVEEGSDNPTFELQEPSPQKETSKVDEKDNGQAQPLPAVP) are disordered. Over residues 185-194 (ETSKVDEKDN) the composition is skewed to basic and acidic residues. 8 helical membrane-spanning segments follow: residues 221–241 (GMSLCVCYSASIGGIATLTGT), 270–290 (FAFPIMVILLLLSWLWLQILF), 327–347 (PMSFAEKAVFILFVILVLLWF), 369–389 (VMVSDGSASILIGVFLFMVPS), 451–471 (LMPLQHVPPPATVFIICLLVA), 485–505 (LLLPILASMAQAICLHPLYVM), 514–534 (LAFMLPVATPPNAIVFSFGGL), and 543–563 (GIMLNIIGVLVIMLAINSWGV).

It belongs to the SLC13A/DASS transporter (TC 2.A.47) family. NADC subfamily. Abundant in kidney and small intestine.

It is found in the apical cell membrane. The catalysed reaction is succinate(out) + 3 Na(+)(out) = succinate(in) + 3 Na(+)(in). The enzyme catalyses fumarate(out) + 3 Na(+)(out) = fumarate(in) + 3 Na(+)(in). It catalyses the reaction 2-oxoglutarate(out) + 3 Na(+)(out) = 2-oxoglutarate(in) + 3 Na(+)(in). Its activity is regulated as follows. Li(+) decreases succinate transport in the presence of Na(+), by competing at one of the three cation binding sites. Functionally, low-affinity sodium-dicarboxylate cotransporter, that mediates the entry of citric acid cycle intermediates, such as succinate, citrate, fumarate and alpha-ketoglutarate (2-oxoglutarate) into the small intestine and renal proximal tubule. Transports the dicarboxylate into the cell with a probable stoichiometry of 3 Na(+) for 1 divalent dicarboxylate, rendering the process electrogenic. Citrate is transported in protonated form as a divalent anion, rather than the trivalent form which is normally found in blood. Has a critical role in renal dicarboxylate transport. This Oryctolagus cuniculus (Rabbit) protein is Solute carrier family 13 member 2 (SLC13A2).